The sequence spans 181 residues: MRVVLLGPPGAGKGTQAEKLSEKLGIPQISTGDLFRKNIGDGTPLGLEAKRYLDAGDLVPAELTNRLVEDRIDQPDAAEGFILDGYPRSVEQAGALKDMLAARNTKLDAVLEFQVSEDELLTRLKGRGRADDTDEVIRNRMKVYREETEPLLEYYRDDLKTVNAVGALDEVFARALSALGQ.

Residue 10-15 participates in ATP binding; it reads GAGKGT. The NMP stretch occupies residues 30-59; that stretch reads STGDLFRKNIGDGTPLGLEAKRYLDAGDLV. Residues Thr-31, Arg-36, 57–59, 85–88, and Gln-92 each bind AMP; these read DLV and GYPR. The LID stretch occupies residues 126 to 132; sequence GRGRADD. Arg-127 serves as a coordination point for ATP. Positions 129 and 140 each coordinate AMP. Gly-166 lines the ATP pocket.

This sequence belongs to the adenylate kinase family. Monomer.

Its subcellular location is the cytoplasm. The catalysed reaction is AMP + ATP = 2 ADP. It functions in the pathway purine metabolism; AMP biosynthesis via salvage pathway; AMP from ADP: step 1/1. Catalyzes the reversible transfer of the terminal phosphate group between ATP and AMP. Plays an important role in cellular energy homeostasis and in adenine nucleotide metabolism. The polypeptide is Adenylate kinase (Mycolicibacterium smegmatis (strain ATCC 700084 / mc(2)155) (Mycobacterium smegmatis)).